The primary structure comprises 650 residues: Serine/threonine-protein phosphatase with EF-hands 1 (650 aa).

The region spanning 16–45 (VIKAALVIQNWYRRYRARLRVRQHYALAIF) is the IQ domain. Positions 124–456 (IHILLQAFKQ…PQFFQYQVTS (333 aa)) are catalytic. Residues Asp175, His177, Asp204, and Asn236 each contribute to the Mn(2+) site. Catalysis depends on His237, which acts as the Proton donor. A Mn(2+)-binding site is contributed by His288. The disordered stretch occupies residues 315 to 348 (PVLGNQETGEKRNKSASNYVEPRKVEPDKTPSED). The span at 335–348 (EPRKVEPDKTPSED) shows a compositional bias: basic and acidic residues. Residue His404 participates in Mn(2+) binding. EF-hand domains follow at residues 484–519 (SRKT…ILGL), 567–602 (RYRS…FNAH), and 607–642 (IDDS…VHKY). Asp497, Ser499, Ser501, Arg503, Glu508, Asp580, Asp582, Ser584, Glu591, Asp620, Asn622, Asp624, Asn626, and Glu631 together coordinate Ca(2+).

It belongs to the PPP phosphatase family. It depends on Mn(2+) as a cofactor. Requires Mg(2+) as cofactor. In terms of tissue distribution, in the embryo it is almost exclusively expressed in the peripheral nervous system, within sensory neurons of cranial and dorsal root ganglia. Otherwise found in fetal inner ear and a small group of neurons in the midbrain/pons junction.

It carries out the reaction O-phospho-L-seryl-[protein] + H2O = L-seryl-[protein] + phosphate. The enzyme catalyses O-phospho-L-threonyl-[protein] + H2O = L-threonyl-[protein] + phosphate. Activated by calcium. May have a role in the recovery or adaptation response of photoreceptors. May have a role in diverse sensory neurons and in development. The sequence is that of Serine/threonine-protein phosphatase with EF-hands 1 (Ppef1) from Mus musculus (Mouse).